Consider the following 354-residue polypeptide: DNA polymerase IV (354 aa).

The UmuC domain maps to 6 to 187 (IIHIDCDCFY…LPVARLHGVG (182 aa)). 2 residues coordinate Mg(2+): Asp-10 and Asp-105. Glu-106 is a catalytic residue.

It belongs to the DNA polymerase type-Y family. Monomer. Mg(2+) is required as a cofactor.

It is found in the cytoplasm. The enzyme catalyses DNA(n) + a 2'-deoxyribonucleoside 5'-triphosphate = DNA(n+1) + diphosphate. Its function is as follows. Poorly processive, error-prone DNA polymerase involved in untargeted mutagenesis. Copies undamaged DNA at stalled replication forks, which arise in vivo from mismatched or misaligned primer ends. These misaligned primers can be extended by PolIV. Exhibits no 3'-5' exonuclease (proofreading) activity. May be involved in translesional synthesis, in conjunction with the beta clamp from PolIII. The polypeptide is DNA polymerase IV (Pseudomonas entomophila (strain L48)).